Reading from the N-terminus, the 318-residue chain is Ribosomal RNA small subunit methyltransferase H (318 aa).

Residues 35-37 (AGH), D55, F84, D105, and Q112 contribute to the S-adenosyl-L-methionine site. Residues 294–318 (SDSELSENNRSRSAKLRIAEKIKSR) form a disordered region.

Belongs to the methyltransferase superfamily. RsmH family.

Its subcellular location is the cytoplasm. The catalysed reaction is cytidine(1402) in 16S rRNA + S-adenosyl-L-methionine = N(4)-methylcytidine(1402) in 16S rRNA + S-adenosyl-L-homocysteine + H(+). Functionally, specifically methylates the N4 position of cytidine in position 1402 (C1402) of 16S rRNA. This Enterococcus faecalis (strain ATCC 700802 / V583) protein is Ribosomal RNA small subunit methyltransferase H.